Reading from the N-terminus, the 184-residue chain is Adenylate kinase (184 aa).

12 to 17 (GAGKGT) contacts ATP. The interval 32–61 (STGELLRKEIDLDTDLGKQVKDIMNRGELV) is NMP. AMP contacts are provided by residues T33, R38, 59–61 (ELV), 85–88 (GYPR), and Q92. The interval 126–132 (IRGRKDD) is LID. R127 lines the ATP pocket. The AMP site is built by R129 and R140. G168 lines the ATP pocket.

The protein belongs to the adenylate kinase family. In terms of assembly, monomer.

Its subcellular location is the cytoplasm. The enzyme catalyses AMP + ATP = 2 ADP. Its pathway is purine metabolism; AMP biosynthesis via salvage pathway; AMP from ADP: step 1/1. Catalyzes the reversible transfer of the terminal phosphate group between ATP and AMP. Plays an important role in cellular energy homeostasis and in adenine nucleotide metabolism. The sequence is that of Adenylate kinase from Prochlorococcus marinus subsp. pastoris (strain CCMP1986 / NIES-2087 / MED4).